The chain runs to 265 residues: Imidazole glycerol phosphate synthase subunit HisF (265 aa).

Catalysis depends on residues Asp11 and Asp130.

Belongs to the HisA/HisF family. As to quaternary structure, heterodimer of HisH and HisF.

Its subcellular location is the cytoplasm. The enzyme catalyses 5-[(5-phospho-1-deoxy-D-ribulos-1-ylimino)methylamino]-1-(5-phospho-beta-D-ribosyl)imidazole-4-carboxamide + L-glutamine = D-erythro-1-(imidazol-4-yl)glycerol 3-phosphate + 5-amino-1-(5-phospho-beta-D-ribosyl)imidazole-4-carboxamide + L-glutamate + H(+). The protein operates within amino-acid biosynthesis; L-histidine biosynthesis; L-histidine from 5-phospho-alpha-D-ribose 1-diphosphate: step 5/9. Functionally, IGPS catalyzes the conversion of PRFAR and glutamine to IGP, AICAR and glutamate. The HisF subunit catalyzes the cyclization activity that produces IGP and AICAR from PRFAR using the ammonia provided by the HisH subunit. The polypeptide is Imidazole glycerol phosphate synthase subunit HisF (Idiomarina loihiensis (strain ATCC BAA-735 / DSM 15497 / L2-TR)).